A 456-amino-acid polypeptide reads, in one-letter code: Adenylosuccinate lyase (456 aa).

N(6)-(1,2-dicarboxyethyl)-AMP contacts are provided by residues 15–16 (RY), 90–92 (NHD), and 122–123 (TS). His-171 (proton donor/acceptor) is an active-site residue. Gln-247 is a N(6)-(1,2-dicarboxyethyl)-AMP binding site. The active-site Proton donor/acceptor is the Ser-295. Residues Ser-296, 301–303 (KVN), Asn-309, Arg-335, and 340–344 (STVLR) contribute to the N(6)-(1,2-dicarboxyethyl)-AMP site.

The protein belongs to the lyase 1 family. Adenylosuccinate lyase subfamily. Homotetramer. Residues from neighboring subunits contribute catalytic and substrate-binding residues to each active site.

It catalyses the reaction N(6)-(1,2-dicarboxyethyl)-AMP = fumarate + AMP. It carries out the reaction (2S)-2-[5-amino-1-(5-phospho-beta-D-ribosyl)imidazole-4-carboxamido]succinate = 5-amino-1-(5-phospho-beta-D-ribosyl)imidazole-4-carboxamide + fumarate. It functions in the pathway purine metabolism; AMP biosynthesis via de novo pathway; AMP from IMP: step 2/2. The protein operates within purine metabolism; IMP biosynthesis via de novo pathway; 5-amino-1-(5-phospho-D-ribosyl)imidazole-4-carboxamide from 5-amino-1-(5-phospho-D-ribosyl)imidazole-4-carboxylate: step 2/2. Catalyzes two reactions in de novo purine nucleotide biosynthesis. Catalyzes the breakdown of 5-aminoimidazole- (N-succinylocarboxamide) ribotide (SAICAR or 2-[5-amino-1-(5-phospho-beta-D-ribosyl)imidazole-4-carboxamido]succinate) to 5-aminoimidazole-4-carboxamide ribotide (AICAR or 5-amino-1-(5-phospho-beta-D-ribosyl)imidazole-4-carboxamide) and fumarate, and of adenylosuccinate (ADS or N(6)-(1,2-dicarboxyethyl)-AMP) to adenosine monophosphate (AMP) and fumarate. This Legionella pneumophila (strain Corby) protein is Adenylosuccinate lyase (purB).